Here is a 1366-residue protein sequence, read N- to C-terminus: DNA-directed RNA polymerase subunit beta (1366 aa).

It belongs to the RNA polymerase beta chain family. The RNAP catalytic core consists of 2 alpha, 1 beta, 1 beta' and 1 omega subunit. When a sigma factor is associated with the core the holoenzyme is formed, which can initiate transcription.

It carries out the reaction RNA(n) + a ribonucleoside 5'-triphosphate = RNA(n+1) + diphosphate. Functionally, DNA-dependent RNA polymerase catalyzes the transcription of DNA into RNA using the four ribonucleoside triphosphates as substrates. In Marinomonas sp. (strain MWYL1), this protein is DNA-directed RNA polymerase subunit beta.